We begin with the raw amino-acid sequence, 257 residues long: Phosphonates import ATP-binding protein PhnC (257 aa).

Residues isoleucine 4–isoleucine 248 enclose the ABC transporter domain. Glycine 37–serine 44 contacts ATP.

It belongs to the ABC transporter superfamily. Phosphonates importer (TC 3.A.1.9.1) family. As to quaternary structure, the complex is composed of two ATP-binding proteins (PhnC), two transmembrane proteins (PhnE) and a solute-binding protein (PhnD).

Its subcellular location is the cell membrane. The enzyme catalyses phosphonate(out) + ATP + H2O = phosphonate(in) + ADP + phosphate + H(+). In terms of biological role, part of the ABC transporter complex PhnCDE involved in phosphonates import. Responsible for energy coupling to the transport system. The polypeptide is Phosphonates import ATP-binding protein PhnC (Staphylococcus aureus (strain COL)).